Here is a 1563-residue protein sequence, read N- to C-terminus: DNA-directed RNA polymerase subunit beta' (1563 aa).

Residues cysteine 61, cysteine 63, cysteine 76, and cysteine 79 each contribute to the Zn(2+) site. Aspartate 588, aspartate 590, and aspartate 592 together coordinate Mg(2+). Positions 925, 999, 1006, and 1009 each coordinate Zn(2+).

Belongs to the RNA polymerase beta' chain family. As to quaternary structure, the RNAP catalytic core consists of 2 alpha, 1 beta, 1 beta' and 1 omega subunit. When a sigma factor is associated with the core the holoenzyme is formed, which can initiate transcription. Mg(2+) serves as cofactor. The cofactor is Zn(2+).

It catalyses the reaction RNA(n) + a ribonucleoside 5'-triphosphate = RNA(n+1) + diphosphate. Functionally, DNA-dependent RNA polymerase catalyzes the transcription of DNA into RNA using the four ribonucleoside triphosphates as substrates. The sequence is that of DNA-directed RNA polymerase subunit beta' from Hydrogenobaculum sp. (strain Y04AAS1).